We begin with the raw amino-acid sequence, 304 residues long: Acetaldehyde dehydrogenase 1 (304 aa).

Position 11–14 (11–14) interacts with NAD(+); it reads SGNI. Cys130 acts as the Acyl-thioester intermediate in catalysis. NAD(+)-binding positions include 161–169 and Asn272; that span reads SVGPGTRAN.

This sequence belongs to the acetaldehyde dehydrogenase family.

It carries out the reaction acetaldehyde + NAD(+) + CoA = acetyl-CoA + NADH + H(+). The sequence is that of Acetaldehyde dehydrogenase 1 (lapF) from Azoarcus sp. (strain BH72).